The primary structure comprises 201 residues: UPF0376 protein F10G2.1 (201 aa).

At 1–3 (MKH) the chain is on the cytoplasmic side. The helical; Signal-anchor for type II membrane protein transmembrane segment at 4-24 (FLLLAIIGILFLGSTYGASVA) threads the bilayer. The Extracellular portion of the chain corresponds to 25-201 (TEKLKASNCT…LLECDFRNIQ (177 aa)). N-linked (GlcNAc...) asparagine glycosylation is found at Asn32 and Asn124.

Belongs to the UPF0376 family.

It is found in the membrane. This Caenorhabditis elegans protein is UPF0376 protein F10G2.1.